Reading from the N-terminus, the 434-residue chain is GTPase Obg (434 aa).

In terms of domain architecture, Obg spans 1 to 158 (MFIDRAKIYV…RWLYLELKLL (158 aa)). In terms of domain architecture, OBG-type G spans 159–328 (ADVGLLGLPN…LLELMEKYVK (170 aa)). Residues 165 to 172 (GLPNAGKS), 190 to 194 (FTTKT), 211 to 214 (DIPG), 280 to 283 (NKID), and 309 to 311 (SAK) each bind GTP. Mg(2+) is bound by residues S172 and T192. The region spanning 347–425 (KQENKKQEIP…IGNYVFKYNS (79 aa)) is the OCT domain.

Belongs to the TRAFAC class OBG-HflX-like GTPase superfamily. OBG GTPase family. As to quaternary structure, monomer. Mg(2+) serves as cofactor.

It is found in the cytoplasm. Functionally, an essential GTPase which binds GTP, GDP and possibly (p)ppGpp with moderate affinity, with high nucleotide exchange rates and a fairly low GTP hydrolysis rate. Plays a role in control of the cell cycle, stress response, ribosome biogenesis and in those bacteria that undergo differentiation, in morphogenesis control. The chain is GTPase Obg from Dictyoglomus turgidum (strain DSM 6724 / Z-1310).